The chain runs to 72 residues: Peptide Ctri9194 (72 aa).

Residues 1–23 form the signal peptide; the sequence is MKTQNVLLSFGIVFLMISFSSET. Ile38 carries the isoleucine amide modification. Residues 42-72 constitute a propeptide that is removed on maturation; that stretch reads SLKDVESLDFLFDPTFTAADLAVLENALEDY.

Belongs to the non-disulfide-bridged peptide (NDBP) superfamily. Short antimicrobial peptide (group 4) family. Expressed by the venom gland.

The protein resides in the secreted. Its function is as follows. Antimicrobial peptide. The sequence is that of Peptide Ctri9194 from Chaerilus tricostatus (Scorpion).